The sequence spans 262 residues: Tropinone reductase homolog At2g30670 (262 aa).

13-37 (LVTGGASGIGHAIVEELAGLGARIY) contributes to the NADP(+) binding site. Serine 146 contributes to the substrate binding site. The Proton acceptor role is filled by tyrosine 159.

Belongs to the short-chain dehydrogenases/reductases (SDR) family. SDR65C subfamily.

The polypeptide is Tropinone reductase homolog At2g30670 (Arabidopsis thaliana (Mouse-ear cress)).